The sequence spans 762 residues: Probable disease resistance protein At1g61300 (762 aa).

Gly2 is lipidated: N-myristoyl glycine. S-palmitoyl cysteine attachment occurs at residues Cys3 and Cys4. One can recognise an NB-ARC domain in the interval 26-329 (NINRNSFGVE…CEGFIGEDQV (304 aa)). 68–75 (GMGGVGKT) is an ATP binding site. LRR repeat units follow at residues 401 to 422 (AVRR…SKCS), 423 to 444 (ELTT…FIRY), 447 to 470 (KLVV…SGLV), 471 to 493 (SLQF…KKLK), and 494 to 516 (KLTF…SRLL).

Belongs to the disease resistance NB-LRR family.

The protein resides in the cell membrane. Probable disease resistance protein. This Arabidopsis thaliana (Mouse-ear cress) protein is Probable disease resistance protein At1g61300.